Reading from the N-terminus, the 399-residue chain is Interferon regulatory factor 9 (399 aa).

Positions threonine 9–proline 116 form a DNA-binding region, IRF tryptophan pentad repeat. The segment at glycine 118–glycine 189 is disordered. A compositionally biased stretch (polar residues) spans leucine 120–serine 129. Serine 139 bears the Phosphoserine mark. Residues asparagine 148–histidine 157 are compositionally biased toward polar residues. Low complexity predominate over residues serine 171–glycine 189. Serine 393 bears the Phosphoserine mark.

It belongs to the IRF family. As to quaternary structure, interacts with STAT2 in the cytoplasm. Forms the interferon-stimulated gene factor 3 complex (ISGF3) with the heterodimer STAT1:STAT2; upon stimulation.

The protein localises to the nucleus. Functionally, transcription factor that plays an essential role in anti-viral immunity. It mediates signaling by type I IFNs (IFN-alpha and IFN-beta). Following type I IFN binding to cell surface receptors, Jak kinases (TYK2 and JAK1) are activated, leading to tyrosine phosphorylation of STAT1 and STAT2. IRF9/ISGF3G associates with the phosphorylated STAT1:STAT2 dimer to form a complex termed ISGF3 transcription factor, that enters the nucleus. ISGF3 binds to the IFN stimulated response element (ISRE) to activate the transcription of interferon stimulated genes, which drive the cell in an antiviral state. This is Interferon regulatory factor 9 (Irf9) from Mus musculus (Mouse).